The primary structure comprises 211 residues: Mediator of RNA polymerase II transcription subunit 20 (211 aa).

Belongs to the Mediator complex subunit 20 family. Component of the Mediator complex.

It is found in the nucleus. Its function is as follows. Component of the Mediator complex, a coactivator involved in the regulated transcription of nearly all RNA polymerase II-dependent genes. Mediator functions as a bridge to convey information from gene-specific regulatory proteins to the basal RNA polymerase II transcription machinery. Mediator is recruited to promoters by direct interactions with regulatory proteins and serves as a scaffold for the assembly of a functional preinitiation complex with RNA polymerase II and the general transcription factors. This Gallus gallus (Chicken) protein is Mediator of RNA polymerase II transcription subunit 20 (MED20).